A 459-amino-acid polypeptide reads, in one-letter code: ATP-dependent protease ATPase subunit HslU (459 aa).

ATP is bound by residues valine 18, 60–65 (GVGKTE), aspartate 272, glutamate 337, and arginine 409.

Belongs to the ClpX chaperone family. HslU subfamily. A double ring-shaped homohexamer of HslV is capped on each side by a ring-shaped HslU homohexamer. The assembly of the HslU/HslV complex is dependent on binding of ATP.

It localises to the cytoplasm. Its function is as follows. ATPase subunit of a proteasome-like degradation complex; this subunit has chaperone activity. The binding of ATP and its subsequent hydrolysis by HslU are essential for unfolding of protein substrates subsequently hydrolyzed by HslV. HslU recognizes the N-terminal part of its protein substrates and unfolds these before they are guided to HslV for hydrolysis. This Thermoanaerobacter pseudethanolicus (strain ATCC 33223 / 39E) (Clostridium thermohydrosulfuricum) protein is ATP-dependent protease ATPase subunit HslU.